The primary structure comprises 499 residues: Pleckstrin homology domain-containing family O member 2 (499 aa).

A compositionally biased stretch (basic and acidic residues) spans 1–11 (MEEEGVKEGGQ). The tract at residues 1 to 21 (MEEEGVKEGGQRPRSAQTADK) is disordered. The 102-residue stretch at 18-119 (TADKAGWIKK…WIKALNEGIN (102 aa)) folds into the PH domain. The residue at position 167 (serine 167) is a Phosphoserine. A disordered region spans residues 170-419 (LSRLDLDVPD…RRRQPGEQLH (250 aa)). The segment covering 201–212 (RPPMPPAKPSPA) has biased composition (pro residues). Residues 229–238 (SAPAPVPASS) show a composition bias toward low complexity. Phosphoserine is present on residues serine 237 and serine 238. Residues 246-258 (EDLETPVVEDSDS) are compositionally biased toward acidic residues. Serine 273 carries the post-translational modification Phosphoserine. Phosphothreonine is present on residues threonine 298 and threonine 311. 2 stretches are compositionally biased toward low complexity: residues 329–349 (EASG…GPAE) and 367–386 (AAGP…TLPP). Serine 399 carries the phosphoserine modification. Residues 416-492 (EQLHRAQLEV…LREKRRELVT (77 aa)) are a coiled coil.

This chain is Pleckstrin homology domain-containing family O member 2 (PLEKHO2), found in Bos taurus (Bovine).